Consider the following 329-residue polypeptide: MVEIYYDDDASLDVLADRKVAVIGYGSQGHAHALNLRDSGVDVRVGLPADSRSRARAEEEGLRVLTPAEASAEADIIMLLTPDTTHRTIYAESIAPHLTAGKALAFGHGFNIRYGLIEPPAGVDVFMVAPKGPGHLVRRVFEEGKGVPVLVAVEADASGNALAVALAYAKGIGGTRAGALRTTFTEETETDLFGEQAVLCGGASALVQAGFETLVEAGYTPEVAYFECLHELKLIVDLMYEGGISQMRYSISDTAEYGDVTRGPRVITPAVKAEMRKILDEIRDGAFAREWVAEDDNGRPNFTKLVAEGKQHPIEQVGAKLRPMMSWIA.

In terms of domain architecture, KARI N-terminal Rossmann spans 2-182; the sequence is VEIYYDDDAS…GGTRAGALRT (181 aa). Residues 25–28, Ser51, and Ser53 contribute to the NADP(+) site; that span reads YGSQ. Residue His108 is part of the active site. NADP(+) is bound at residue Gly134. The 146-residue stretch at 183-328 folds into the KARI C-terminal knotted domain; that stretch reads TFTEETETDL…AKLRPMMSWI (146 aa). 4 residues coordinate Mg(2+): Asp191, Glu195, Glu227, and Glu231. A substrate-binding site is contributed by Ser252.

This sequence belongs to the ketol-acid reductoisomerase family. The cofactor is Mg(2+).

It catalyses the reaction (2R)-2,3-dihydroxy-3-methylbutanoate + NADP(+) = (2S)-2-acetolactate + NADPH + H(+). The enzyme catalyses (2R,3R)-2,3-dihydroxy-3-methylpentanoate + NADP(+) = (S)-2-ethyl-2-hydroxy-3-oxobutanoate + NADPH + H(+). It functions in the pathway amino-acid biosynthesis; L-isoleucine biosynthesis; L-isoleucine from 2-oxobutanoate: step 2/4. Its pathway is amino-acid biosynthesis; L-valine biosynthesis; L-valine from pyruvate: step 2/4. Its function is as follows. Involved in the biosynthesis of branched-chain amino acids (BCAA). Catalyzes an alkyl-migration followed by a ketol-acid reduction of (S)-2-acetolactate (S2AL) to yield (R)-2,3-dihydroxy-isovalerate. In the isomerase reaction, S2AL is rearranged via a Mg-dependent methyl migration to produce 3-hydroxy-3-methyl-2-ketobutyrate (HMKB). In the reductase reaction, this 2-ketoacid undergoes a metal-dependent reduction by NADPH to yield (R)-2,3-dihydroxy-isovalerate. The polypeptide is Ketol-acid reductoisomerase (NADP(+)) (Frankia casuarinae (strain DSM 45818 / CECT 9043 / HFP020203 / CcI3)).